The chain runs to 412 residues: Phosphoglycerate kinase (412 aa).

Residues 24–26 (DLN), Arg47, 70–73 (HLGR), Arg130, and Arg167 contribute to the substrate site. ATP is bound by residues Lys217, Gly312, Glu343, and 369-372 (GGDS).

It belongs to the phosphoglycerate kinase family. In terms of assembly, monomer.

The protein resides in the cytoplasm. It catalyses the reaction (2R)-3-phosphoglycerate + ATP = (2R)-3-phospho-glyceroyl phosphate + ADP. It functions in the pathway carbohydrate degradation; glycolysis; pyruvate from D-glyceraldehyde 3-phosphate: step 2/5. In Kineococcus radiotolerans (strain ATCC BAA-149 / DSM 14245 / SRS30216), this protein is Phosphoglycerate kinase.